A 118-amino-acid chain; its full sequence is Non-specific lipid-transfer protein 1 (118 aa).

The first 25 residues, 1-25 (MAGVMKLACLLLACMIVAGPITSNA), serve as a signal peptide directing secretion. 4 disulfides stabilise this stretch: Cys-29–Cys-76, Cys-39–Cys-53, Cys-54–Cys-100, and Cys-74–Cys-114.

It belongs to the plant LTP family. As to expression, expressed primarily in epidermal cells.

Its subcellular location is the secreted. The protein localises to the cell wall. In terms of biological role, plant non-specific lipid-transfer proteins transfer phospholipids as well as galactolipids across membranes. May play a role in wax or cutin deposition in the cell walls of expanding epidermal cells and certain secretory tissues. This is Non-specific lipid-transfer protein 1 (LTP1) from Arabidopsis thaliana (Mouse-ear cress).